The sequence spans 386 residues: Alkanesulfonate monooxygenase (386 aa).

Belongs to the SsuD family.

The catalysed reaction is an alkanesulfonate + FMNH2 + O2 = an aldehyde + FMN + sulfite + H2O + 2 H(+). Its function is as follows. Catalyzes the desulfonation of aliphatic sulfonates. The protein is Alkanesulfonate monooxygenase of Paraburkholderia phytofirmans (strain DSM 17436 / LMG 22146 / PsJN) (Burkholderia phytofirmans).